A 508-amino-acid polypeptide reads, in one-letter code: MDIRAAEISAILKNQIKNFGQDAEVSEVGQVLSVGDGIARVYGLDNVQAGEMVEFPGGIRGMALNLESDNVGVVIFGSDRDIKEGDTVKRTGAIVEVPVGPELLGRVVDALGNPIDGKGPINSAIRSRVDVKAPGIIPRKGVHEPMSTGIKAIDALIPVGRGQRELVIGDRQTGKTAIILDTFLNQKPAHDAGGDDKMFCVYVAIGQKRSTVAQFVKVLEERGALKYSIIIAATASDPAPMQYLAPFAGCTMGEYFRDKGQHALIAYDDLSKQAVAYRQMSLLLRRPPGREAYPGDVFYLHSRLLERAAKLSDERGAGSLTALPVIETQGNDVSAFIPTNVISITDGQIFLETDLFYQGIRPAVNVGLSVSRVGSAAQIKAMKQVAGSIKGELAQYREMAAFAQFGSDLDAATQRLLNRGARLTELLKQPQFSPLKVEEQVVVIFAGVNGYLDKLAVSDVGRFEHGVLSYLRTEGKDILDAIRTEKAISDDVKGKLKAALDTFAKSFA.

ATP is bound at residue 169–176; the sequence is GDRQTGKT.

The protein belongs to the ATPase alpha/beta chains family. As to quaternary structure, F-type ATPases have 2 components, CF(1) - the catalytic core - and CF(0) - the membrane proton channel. CF(1) has five subunits: alpha(3), beta(3), gamma(1), delta(1), epsilon(1). CF(0) has three main subunits: a(1), b(2) and c(9-12). The alpha and beta chains form an alternating ring which encloses part of the gamma chain. CF(1) is attached to CF(0) by a central stalk formed by the gamma and epsilon chains, while a peripheral stalk is formed by the delta and b chains.

Its subcellular location is the cell inner membrane. It catalyses the reaction ATP + H2O + 4 H(+)(in) = ADP + phosphate + 5 H(+)(out). In terms of biological role, produces ATP from ADP in the presence of a proton gradient across the membrane. The alpha chain is a regulatory subunit. The protein is ATP synthase subunit alpha of Allorhizobium ampelinum (strain ATCC BAA-846 / DSM 112012 / S4) (Agrobacterium vitis (strain S4)).